We begin with the raw amino-acid sequence, 433 residues long: Enolase (433 aa).

A (2R)-2-phosphoglycerate-binding site is contributed by glutamine 163. Glutamate 205 (proton donor) is an active-site residue. The Mg(2+) site is built by aspartate 242, glutamate 286, and aspartate 313. (2R)-2-phosphoglycerate-binding residues include lysine 338, arginine 367, serine 368, and lysine 389. The Proton acceptor role is filled by lysine 338.

The protein belongs to the enolase family. Requires Mg(2+) as cofactor.

The protein localises to the cytoplasm. The protein resides in the secreted. Its subcellular location is the cell surface. It carries out the reaction (2R)-2-phosphoglycerate = phosphoenolpyruvate + H2O. It participates in carbohydrate degradation; glycolysis; pyruvate from D-glyceraldehyde 3-phosphate: step 4/5. Functionally, catalyzes the reversible conversion of 2-phosphoglycerate (2-PG) into phosphoenolpyruvate (PEP). It is essential for the degradation of carbohydrates via glycolysis. The protein is Enolase of Koribacter versatilis (strain Ellin345).